The primary structure comprises 167 residues: Phosphopantetheine adenylyltransferase (167 aa).

Ser-11 is a substrate binding site. ATP is bound by residues 11 to 12 (SF) and His-19. Substrate contacts are provided by Lys-43, Thr-76, and Arg-90. Residues 91–93 (GIR), Glu-101, and 126–132 (YDALSST) contribute to the ATP site.

It belongs to the bacterial CoaD family. In terms of assembly, homohexamer. It depends on Mg(2+) as a cofactor.

Its subcellular location is the cytoplasm. It carries out the reaction (R)-4'-phosphopantetheine + ATP + H(+) = 3'-dephospho-CoA + diphosphate. It participates in cofactor biosynthesis; coenzyme A biosynthesis; CoA from (R)-pantothenate: step 4/5. Its function is as follows. Reversibly transfers an adenylyl group from ATP to 4'-phosphopantetheine, yielding dephospho-CoA (dPCoA) and pyrophosphate. The protein is Phosphopantetheine adenylyltransferase of Lacticaseibacillus paracasei (strain ATCC 334 / BCRC 17002 / CCUG 31169 / CIP 107868 / KCTC 3260 / NRRL B-441) (Lactobacillus paracasei).